Consider the following 213-residue polypeptide: Outer-membrane lipoprotein carrier protein (213 aa).

A signal peptide spans 1 to 23; that stretch reads MKKLLKQSLLGFALVSMTGAAFA.

The protein belongs to the LolA family. As to quaternary structure, monomer.

The protein resides in the periplasm. In terms of biological role, participates in the translocation of lipoproteins from the inner membrane to the outer membrane. Only forms a complex with a lipoprotein if the residue after the N-terminal Cys is not an aspartate (The Asp acts as a targeting signal to indicate that the lipoprotein should stay in the inner membrane). This Actinobacillus pleuropneumoniae serotype 3 (strain JL03) protein is Outer-membrane lipoprotein carrier protein.